A 301-amino-acid polypeptide reads, in one-letter code: Ankyrin repeat domain-containing protein 29 (301 aa).

ANK repeat units follow at residues 11-41 (PLAN…DVDC), 45-74 (HGTT…DINL), 78-107 (SGTT…STEF), 111-140 (DGGT…NIHD), 144-173 (DGAT…KVNQ), 177-206 (DGTA…DRDA), 210-239 (DGTT…TLGI), and 242-271 (NGTS…DPSL).

The sequence is that of Ankyrin repeat domain-containing protein 29 (ANKRD29) from Homo sapiens (Human).